The following is a 35-amino-acid chain: uncharacterized protein (35 aa).

A helical transmembrane segment spans residues 14–34 (LAHLIGIIYLIIILGTLVMLF).

It localises to the endoplasmic reticulum membrane. This is an uncharacterized protein from Saccharomyces cerevisiae (strain ATCC 204508 / S288c) (Baker's yeast).